We begin with the raw amino-acid sequence, 220 residues long: Nucleoside diphosphate kinase, mitochondrial (220 aa).

The N-terminal 57 residues, 1–57 (MFSRFARAFPKILASGASQRTFATVQKAFANPTSKKLIVGSSLLIGSAFATTSFVAC), are a transit peptide targeting the mitochondrion. Residues Lys-80, Phe-128, Arg-156, Thr-162, Arg-173, and Asn-183 each coordinate ATP. Catalysis depends on His-186, which acts as the Pros-phosphohistidine intermediate.

This sequence belongs to the NDK family. Mg(2+) is required as a cofactor.

The protein resides in the mitochondrion intermembrane space. The enzyme catalyses a 2'-deoxyribonucleoside 5'-diphosphate + ATP = a 2'-deoxyribonucleoside 5'-triphosphate + ADP. It carries out the reaction a ribonucleoside 5'-diphosphate + ATP = a ribonucleoside 5'-triphosphate + ADP. Its function is as follows. Major role in the synthesis of nucleoside triphosphates other than ATP. The ATP gamma phosphate is transferred to the NDP beta phosphate via a ping-pong mechanism, using a phosphorylated active-site intermediate. This is Nucleoside diphosphate kinase, mitochondrial (ndkM) from Dictyostelium discoideum (Social amoeba).